The primary structure comprises 477 residues: Ribulose bisphosphate carboxylase large chain (477 aa).

The propeptide occupies 1 to 2 (MS). Proline 3 bears the N-acetylproline mark. Lysine 14 carries the N6,N6,N6-trimethyllysine modification. Substrate contacts are provided by asparagine 123 and threonine 173. The Proton acceptor role is filled by lysine 175. Substrate is bound at residue lysine 177. Mg(2+)-binding residues include lysine 201, aspartate 203, and glutamate 204. Residue lysine 201 is modified to N6-carboxylysine. Residue histidine 294 is the Proton acceptor of the active site. Arginine 295, histidine 327, and serine 379 together coordinate substrate.

This sequence belongs to the RuBisCO large chain family. Type I subfamily. Heterohexadecamer of 8 large chains and 8 small chains; disulfide-linked. The disulfide link is formed within the large subunit homodimers. Requires Mg(2+) as cofactor. Post-translationally, the disulfide bond which can form in the large chain dimeric partners within the hexadecamer appears to be associated with oxidative stress and protein turnover.

It localises to the plastid. The protein localises to the chloroplast. It carries out the reaction 2 (2R)-3-phosphoglycerate + 2 H(+) = D-ribulose 1,5-bisphosphate + CO2 + H2O. The catalysed reaction is D-ribulose 1,5-bisphosphate + O2 = 2-phosphoglycolate + (2R)-3-phosphoglycerate + 2 H(+). RuBisCO catalyzes two reactions: the carboxylation of D-ribulose 1,5-bisphosphate, the primary event in carbon dioxide fixation, as well as the oxidative fragmentation of the pentose substrate in the photorespiration process. Both reactions occur simultaneously and in competition at the same active site. The sequence is that of Ribulose bisphosphate carboxylase large chain from Nicotiana otophora (Tobacco).